The following is a 569-amino-acid chain: Oxygen-dependent choline dehydrogenase (569 aa).

9–38 (DYVIIGGGSAGSVLGNRLSEDKDKEVLVLE) contacts FAD. His475 serves as the catalytic Proton acceptor.

Belongs to the GMC oxidoreductase family. FAD serves as cofactor.

It catalyses the reaction choline + A = betaine aldehyde + AH2. It carries out the reaction betaine aldehyde + NAD(+) + H2O = glycine betaine + NADH + 2 H(+). It functions in the pathway amine and polyamine biosynthesis; betaine biosynthesis via choline pathway; betaine aldehyde from choline (cytochrome c reductase route): step 1/1. Its function is as follows. Involved in the biosynthesis of the osmoprotectant glycine betaine. Catalyzes the oxidation of choline to betaine aldehyde and betaine aldehyde to glycine betaine at the same rate. This is Oxygen-dependent choline dehydrogenase from Staphylococcus aureus (strain MSSA476).